Here is a 249-residue protein sequence, read N- to C-terminus: DNA repair protein RecO (249 aa).

It belongs to the RecO family.

Its function is as follows. Involved in DNA repair and RecF pathway recombination. The chain is DNA repair protein RecO from Lawsonia intracellularis (strain PHE/MN1-00).